Reading from the N-terminus, the 460-residue chain is GTPase Der (460 aa).

2 consecutive EngA-type G domains span residues 21 to 187 (PRVV…FSVD) and 198 to 373 (VRLA…AQLN). Residues 27-34 (GRPNVGKS), 74-78 (DTSGF), 141-144 (NKTE), 204-211 (GKPNTGKS), 251-255 (DTAGI), and 316-319 (NKWD) each bind GTP. The 84-residue stretch at 374-457 (TKVETSALNT…PVKLTIRKNC (84 aa)) folds into the KH-like domain.

This sequence belongs to the TRAFAC class TrmE-Era-EngA-EngB-Septin-like GTPase superfamily. EngA (Der) GTPase family. Associates with the 50S ribosomal subunit.

Its function is as follows. GTPase that plays an essential role in the late steps of ribosome biogenesis. This chain is GTPase Der, found in Treponema pallidum subsp. pallidum (strain SS14).